The sequence spans 503 residues: Probable cytosol aminopeptidase (503 aa).

Mn(2+) is bound by residues Lys-270 and Asp-275. The active site involves Lys-282. Residues Asp-293, Asp-352, and Glu-354 each contribute to the Mn(2+) site. Residue Arg-356 is part of the active site.

The protein belongs to the peptidase M17 family. Mn(2+) serves as cofactor.

The protein localises to the cytoplasm. The enzyme catalyses Release of an N-terminal amino acid, Xaa-|-Yaa-, in which Xaa is preferably Leu, but may be other amino acids including Pro although not Arg or Lys, and Yaa may be Pro. Amino acid amides and methyl esters are also readily hydrolyzed, but rates on arylamides are exceedingly low.. It catalyses the reaction Release of an N-terminal amino acid, preferentially leucine, but not glutamic or aspartic acids.. In terms of biological role, presumably involved in the processing and regular turnover of intracellular proteins. Catalyzes the removal of unsubstituted N-terminal amino acids from various peptides. This is Probable cytosol aminopeptidase from Escherichia fergusonii (strain ATCC 35469 / DSM 13698 / CCUG 18766 / IAM 14443 / JCM 21226 / LMG 7866 / NBRC 102419 / NCTC 12128 / CDC 0568-73).